The primary structure comprises 282 residues: Tumor necrosis factor ligand superfamily member 6 (282 aa).

At 1 to 82 the chain is on the cytoplasmic side; that stretch reads MQQPFNYPYP…KKKRDHNAGL (82 aa). The interval 30–73 is disordered; sequence FPCPASVPGRPGQRRPPPPPPPPPPPPTLLPSRPLPPLPPPSLK. Residues 43-71 show a composition bias toward pro residues; that stretch reads RRPPPPPPPPPPPPTLLPSRPLPPLPPPS. A helical; Signal-anchor for type II membrane protein membrane pass occupies residues 83–103; it reads CLLVMFFMVLVALVGLGLGMF. The Extracellular portion of the chain corresponds to 104–282; it reads QLFHLQKELT…SKTFFGLYKL (179 aa). Residues 119–132 show a composition bias toward basic and acidic residues; sequence ASQRHTESSLEKQI. The tract at residues 119–140 is disordered; the sequence is ASQRHTESSLEKQIGHPNLPSE. The region spanning 146-282 is the THD domain; the sequence is KVAHLTGKPN…SKTFFGLYKL (137 aa). Residue N185 is glycosylated (N-linked (GlcNAc...) asparagine). A disulfide bridge links C203 with C234. N-linked (GlcNAc...) asparagine glycosylation is found at N251 and N261.

It belongs to the tumor necrosis factor family. As to quaternary structure, homotrimer. Interacts with ARHGAP9, BAIAP2L1, BTK, CACNB3, CACNB4, CRK, DLG2, DNMBP, DOCK4, EPS8L3, FGR, FYB1, FYN, HCK, ITK, ITSN2, KALRN, LYN, MACC1, MIA, MPP4, MYO15A, NCF1, NCK1, NCK2, NCKIPSD, OSTF1, PIK3R1, PSTPIP1, RIMBP3C, SAMSN1, SH3GL3, SH3PXD2B, SH3PXD2A, SH3RF2, SKAP2, SNX33, SNX9, SORBS3, SPTA1, SRC, SRGAP1, SRGAP2, SRGAP3, TEC, TJP3 and YES1. In terms of processing, the soluble form derives from the membrane form by proteolytic processing. The membrane-bound form undergoes two successive intramembrane proteolytic cleavages. The first one is processed by ADAM10 producing an N-terminal fragment, which lacks the receptor-binding extracellular domain. This ADAM10-processed FasL (FasL APL) remnant form is still membrane anchored and further processed by SPPL2A that liberates the FasL intracellular domain (FasL ICD). FasL shedding by ADAM10 is a prerequisite for subsequent intramembrane cleavage by SPPL2A in T-cells. Phosphorylated by FGR on tyrosine residues; this is required for ubiquitination and subsequent internalization. Post-translationally, N-glycosylated. Glycosylation enhances apoptotic activity. In terms of processing, monoubiquitinated.

It is found in the cell membrane. It localises to the cytoplasmic vesicle lumen. The protein resides in the lysosome lumen. The protein localises to the secreted. Its subcellular location is the nucleus. Its function is as follows. Cytokine that binds to TNFRSF6/FAS, a receptor that transduces the apoptotic signal into cells. Involved in cytotoxic T-cell-mediated apoptosis, natural killer cell-mediated apoptosis and in T-cell development. Initiates fratricidal/suicidal activation-induced cell death (AICD) in antigen-activated T-cells contributing to the termination of immune responses. TNFRSF6/FAS-mediated apoptosis also has a role in the induction of peripheral tolerance. Binds to TNFRSF6B/DcR3, a decoy receptor that blocks apoptosis. Functionally, induces FAS-mediated activation of NF-kappa-B, initiating non-apoptotic signaling pathways. Can induce apoptosis but does not appear to be essential for this process. Cytoplasmic form induces gene transcription inhibition. In Sus scrofa (Pig), this protein is Tumor necrosis factor ligand superfamily member 6 (FASLG).